The chain runs to 64 residues: DNA-binding protein 7a (64 aa).

It belongs to the 7 kDa DNA-binding/endoribonuclease P2 family. As to quaternary structure, monomer.

It localises to the cytoplasm. Can constrain negative DNA supercoils. May be involved in maintaining the integrity of the genome at high temperature. This is DNA-binding protein 7a from Saccharolobus islandicus (strain L.D.8.5 / Lassen #2) (Sulfolobus islandicus).